We begin with the raw amino-acid sequence, 365 residues long: Class I histocompatibility antigen, Gogo-A*0201 alpha chain (365 aa).

An N-terminal signal peptide occupies residues 1–24 (MAVMAPRTLLLLLLGALALTQTWA). The alpha-1 stretch occupies residues 25 to 114 (GSHSMRYFST…LRGYYNQSEA (90 aa)). Topologically, residues 25-308 (GSHSMRYFST…EPSSQPTIPI (284 aa)) are extracellular. An N-linked (GlcNAc...) asparagine glycan is attached at N110. The interval 115–206 (GSHTIQKMYG…ENGKETLQRT (92 aa)) is alpha-2. 2 disulfides stabilise this stretch: C125–C188 and C227–C283. The alpha-3 stretch occupies residues 207-298 (DAPKTHMTHH…SLPKPLTLRW (92 aa)). An Ig-like C1-type domain is found at 209–295 (PKTHMTHHAV…QHESLPKPLT (87 aa)). The tract at residues 299–308 (EPSSQPTIPI) is connecting peptide. The chain crosses the membrane as a helical span at residues 309-332 (VGIIAGLVLFGAVIAGAVIAAVRW). The Cytoplasmic segment spans residues 333–365 (RRKSSDRKGGSYSQAASSDSAQGSDVSLTACKV). The tract at residues 338 to 365 (DRKGGSYSQAASSDSAQGSDVSLTACKV) is disordered. A compositionally biased stretch (low complexity) spans 342–359 (GSYSQAASSDSAQGSDVS). At S343 the chain carries Phosphoserine. Y344 carries the post-translational modification Phosphotyrosine. A phosphoserine mark is found at S345, S349, S350, S352, S356, and S359.

This sequence belongs to the MHC class I family. Heterodimer of an alpha chain and a beta chain (beta-2-microglobulin).

It is found in the membrane. Functionally, involved in the presentation of foreign antigens to the immune system. This Gorilla gorilla gorilla (Western lowland gorilla) protein is Class I histocompatibility antigen, Gogo-A*0201 alpha chain.